A 92-amino-acid chain; its full sequence is Small ribosomal subunit protein uS17 (92 aa).

This sequence belongs to the universal ribosomal protein uS17 family. As to quaternary structure, part of the 30S ribosomal subunit.

Functionally, one of the primary rRNA binding proteins, it binds specifically to the 5'-end of 16S ribosomal RNA. This chain is Small ribosomal subunit protein uS17, found in Wigglesworthia glossinidia brevipalpis.